The chain runs to 523 residues: Ubiquitin carboxyl-terminal hydrolase 22-A (523 aa).

Residues 4–121 form a UBP-type zinc finger; it reads AGCSHVNSFK…KEEQRKAWKL (118 aa). Residues cysteine 6, histidine 8, cysteine 46, cysteine 49, cysteine 59, cysteine 62, cysteine 67, histidine 72, histidine 76, histidine 82, cysteine 95, and cysteine 98 each contribute to the Zn(2+) site. Residues 174–518 enclose the USP domain; that stretch reads RGLINLGNTC…EGYLLFYHKQ (345 aa). The active-site Nucleophile is cysteine 183. The active-site Proton acceptor is the histidine 477.

It belongs to the peptidase C19 family. UBP8 subfamily. Component of some SAGA transcription coactivator-HAT complexes.

It localises to the nucleus. The catalysed reaction is Thiol-dependent hydrolysis of ester, thioester, amide, peptide and isopeptide bonds formed by the C-terminal Gly of ubiquitin (a 76-residue protein attached to proteins as an intracellular targeting signal).. Histone deubiquitinating component of the transcription regulatory histone acetylation (HAT) complex SAGA. Catalyzes the deubiquitination of both histones H2A and H2B, thereby acting as a coactivator. Recruited to specific gene promoters by activators, where it is required for transcription. In Xenopus laevis (African clawed frog), this protein is Ubiquitin carboxyl-terminal hydrolase 22-A (usp22-a).